Reading from the N-terminus, the 107-residue chain is Chlorobenzene dioxygenase, ferredoxin component (107 aa).

The 96-residue stretch at 4-99 (TYIMRQSDLP…IKVEGGDVHV (96 aa)) folds into the Rieske domain. The [2Fe-2S] cluster site is built by cysteine 43, histidine 45, cysteine 62, and histidine 65.

It belongs to the bacterial ring-hydroxylating dioxygenase ferredoxin component family. This dioxygenase system consists of four proteins: the two subunits of the oxygenase component (TecA1 and TecA2), a ferredoxin (TecA3) and a ferredoxin reductase (TecA4). [2Fe-2S] cluster is required as a cofactor.

The protein operates within aromatic compound metabolism. Functionally, part of the chlorobenzene dioxygenase system that catalyzes the dihydroxylation of a range of aromatic compounds, including chlorinated benzenes and toluenes, and dinuclear aromatics such as biphenyl and dibenzo-p-dioxin. The sequence is that of Chlorobenzene dioxygenase, ferredoxin component from Cupriavidus sp. (strain PS12).